The sequence spans 1116 residues: DUB-associated factor 1 (1116 aa).

WD repeat units lie at residues 21–62, 91–132, 160–200, 219–262, 266–305, 387–426, and 428–466; these read AHIL…NEPE, KNSD…DHDD, VHDG…EKMA, SMSP…EVIR, AHRTNIKVVRTLDDSTRLISTSSDGVINVWDLNCRHDQTT, KKYGGILDIALLPNEKLLFSFCTDSNLNVLDLTNNHFSVN, and GGFALTRSSLLTNRRHVITENTKGQMQRWDIVSCELLNT. The tract at residues 578 to 600 is disordered; sequence LDTGYNSESKKNNKDKKRKSTFK. Ser-668 carries the phosphoserine modification. The residue at position 693 (Thr-693) is a Phosphothreonine. Positions 747–776 are enriched in polar residues; it reads ISSQDLPSNNTHNKLRSSENSRANSTSTLE. 2 disordered regions span residues 747 to 784 and 963 to 994; these read ISSQDLPSNNTHNKLRSSENSRANSTSTLEGNEKKKPE and FISASDTTESSGNDSSDSSLGNGNEAVSPSTQ. The span at 967 to 987 shows a compositional bias: low complexity; the sequence is SDTTESSGNDSSDSSLGNGNE.

Interacts (via its WD repeats) with ubiquitin.

It is found in the cytoplasm. Ubiquitin-binding protein involved in the resistance to phenanthroline, sanguinarine, nordihydroguaiaretic acid (NDGA), isopropyl (N-3-chloro-phenyl)-carbamate (IPCPC) and guanosine 5'-O-(2-thiodiphosphate). The polypeptide is DUB-associated factor 1 (Saccharomyces cerevisiae (strain ATCC 204508 / S288c) (Baker's yeast)).